Reading from the N-terminus, the 364-residue chain is Aminomethyltransferase (364 aa).

It belongs to the GcvT family. The glycine cleavage system is composed of four proteins: P, T, L and H.

It carries out the reaction N(6)-[(R)-S(8)-aminomethyldihydrolipoyl]-L-lysyl-[protein] + (6S)-5,6,7,8-tetrahydrofolate = N(6)-[(R)-dihydrolipoyl]-L-lysyl-[protein] + (6R)-5,10-methylene-5,6,7,8-tetrahydrofolate + NH4(+). In terms of biological role, the glycine cleavage system catalyzes the degradation of glycine. In Shewanella loihica (strain ATCC BAA-1088 / PV-4), this protein is Aminomethyltransferase.